A 265-amino-acid polypeptide reads, in one-letter code: 4-hydroxy-tetrahydrodipicolinate reductase (265 aa).

Residue 9-14 coordinates NAD(+); it reads GPRGRM. Residue R37 participates in NADP(+) binding. NAD(+) is bound by residues 98–100 and 124–127; these read GTT and APNF. H154 serves as the catalytic Proton donor/acceptor. H155 is a binding site for (S)-2,3,4,5-tetrahydrodipicolinate. The Proton donor role is filled by K158. 164–165 lines the (S)-2,3,4,5-tetrahydrodipicolinate pocket; the sequence is GT.

Belongs to the DapB family.

Its subcellular location is the cytoplasm. The catalysed reaction is (S)-2,3,4,5-tetrahydrodipicolinate + NAD(+) + H2O = (2S,4S)-4-hydroxy-2,3,4,5-tetrahydrodipicolinate + NADH + H(+). It carries out the reaction (S)-2,3,4,5-tetrahydrodipicolinate + NADP(+) + H2O = (2S,4S)-4-hydroxy-2,3,4,5-tetrahydrodipicolinate + NADPH + H(+). The protein operates within amino-acid biosynthesis; L-lysine biosynthesis via DAP pathway; (S)-tetrahydrodipicolinate from L-aspartate: step 4/4. Its function is as follows. Catalyzes the conversion of 4-hydroxy-tetrahydrodipicolinate (HTPA) to tetrahydrodipicolinate. In Geobacillus kaustophilus (strain HTA426), this protein is 4-hydroxy-tetrahydrodipicolinate reductase.